The primary structure comprises 334 residues: D-alanine--D-alanine ligase (334 aa).

Residues 114–314 enclose the ATP-grasp domain; it reads KRIWRFEGLP…YEELCLRILA (201 aa). ATP is bound at residue 140-195; that stretch reads LEDLGSPMIVKPSREGSTIGLTKVTSPGQCEQAYRLASRYDPEVLCEQFIEGEETT. The Mg(2+) site is built by aspartate 267, glutamate 281, and asparagine 283.

It belongs to the D-alanine--D-alanine ligase family. Mg(2+) is required as a cofactor. Requires Mn(2+) as cofactor.

It is found in the cytoplasm. The enzyme catalyses 2 D-alanine + ATP = D-alanyl-D-alanine + ADP + phosphate + H(+). The protein operates within cell wall biogenesis; peptidoglycan biosynthesis. Cell wall formation. The protein is D-alanine--D-alanine ligase of Paracidovorax citrulli (strain AAC00-1) (Acidovorax citrulli).